Reading from the N-terminus, the 327-residue chain is Eukaryotic translation initiation factor 3 subunit I (327 aa).

WD repeat units follow at residues 8–49 (GHER…GSYD), 51–89 (HNGA…CLYT), 188–227 (VHRY…KLKQ), 229–268 (KSER…GHFE), and 285–324 (GHFG…LGFT).

Belongs to the eIF-3 subunit I family. In terms of assembly, component of the eukaryotic translation initiation factor 3 (eIF-3) complex.

The protein localises to the cytoplasm. In terms of biological role, component of the eukaryotic translation initiation factor 3 (eIF-3) complex, which is involved in protein synthesis of a specialized repertoire of mRNAs and, together with other initiation factors, stimulates binding of mRNA and methionyl-tRNAi to the 40S ribosome. The eIF-3 complex specifically targets and initiates translation of a subset of mRNAs involved in cell proliferation. The polypeptide is Eukaryotic translation initiation factor 3 subunit I (Caenorhabditis elegans).